We begin with the raw amino-acid sequence, 273 residues long: MNNRVHQGHLARKRFGQNFLNDQFVIDSIVSAINPQKGQAMVEIGPGLAALTEPVGERLDQLTVIELDRDLAARLQTHPFLGPKLTIYQQDAMTMDFGELSQKMGQPLRVFGNLPYNISTPLMFHLFSYTDAIADMHFMLQKEVVNRLVAGPNSKAYGRLSVMAQYFCQVIPVLEVPPTAFTPPPKVDSAVVRLVPHATPPHPVKELRLLSRLTTEAFNQRRKTIRNSLGNVFSPEVLTSLGIDPAMRAENISVAQYCQMANYLADNPPSKES.

Positions 18, 20, 45, 66, 91, and 113 each coordinate S-adenosyl-L-methionine.

It belongs to the class I-like SAM-binding methyltransferase superfamily. rRNA adenine N(6)-methyltransferase family. RsmA subfamily.

It localises to the cytoplasm. The catalysed reaction is adenosine(1518)/adenosine(1519) in 16S rRNA + 4 S-adenosyl-L-methionine = N(6)-dimethyladenosine(1518)/N(6)-dimethyladenosine(1519) in 16S rRNA + 4 S-adenosyl-L-homocysteine + 4 H(+). Functionally, specifically dimethylates two adjacent adenosines (A1518 and A1519) in the loop of a conserved hairpin near the 3'-end of 16S rRNA in the 30S particle. May play a critical role in biogenesis of 30S subunits. This is Ribosomal RNA small subunit methyltransferase A from Cronobacter sakazakii (strain ATCC BAA-894) (Enterobacter sakazakii).